The sequence spans 428 residues: Protein clpf-1 (428 aa).

Residues Glu-16, Arg-56, and 124 to 129 contribute to the ATP site; that span reads DVGKTT.

This sequence belongs to the Clp1 family. Clp1 subfamily.

It localises to the nucleus. Functionally, required for endonucleolytic cleavage during polyadenylation-dependent pre-mRNA 3'-end formation. This Caenorhabditis elegans protein is Protein clpf-1.